The following is a 604-amino-acid chain: Sulfite reductase [NADPH] flavoprotein alpha-component (604 aa).

Residues 68–206 (LSIIFASQTG…PAAEWRKQAL (139 aa)) form the Flavodoxin-like domain. Residues 74–79 (SQTGNA), 121–124 (STNG), and 157–166 (LGDSSYEFFC) each bind FMN. The FAD-binding FR-type domain occupies 239-453 (QNPYTATLLT…VEHNNNFKLP (215 aa)). Residues Thr327, Gly361, 391–394 (RLYS), 409–411 (TVG), Tyr415, and 424–427 (GGAS) contribute to the FAD site. NADP(+)-binding positions include 524-525 (SR), 530-534 (KVYVQ), and Asp566. Tyr604 lines the FAD pocket.

It belongs to the NADPH-dependent sulphite reductase flavoprotein subunit CysJ family. In the N-terminal section; belongs to the flavodoxin family. The protein in the C-terminal section; belongs to the flavoprotein pyridine nucleotide cytochrome reductase family. In terms of assembly, alpha(8)-beta(8). The alpha component is a flavoprotein, the beta component is a hemoprotein. It depends on FAD as a cofactor. Requires FMN as cofactor.

The catalysed reaction is hydrogen sulfide + 3 NADP(+) + 3 H2O = sulfite + 3 NADPH + 4 H(+). It participates in sulfur metabolism; hydrogen sulfide biosynthesis; hydrogen sulfide from sulfite (NADPH route): step 1/1. Its function is as follows. Component of the sulfite reductase complex that catalyzes the 6-electron reduction of sulfite to sulfide. This is one of several activities required for the biosynthesis of L-cysteine from sulfate. The flavoprotein component catalyzes the electron flow from NADPH -&gt; FAD -&gt; FMN to the hemoprotein component. The chain is Sulfite reductase [NADPH] flavoprotein alpha-component from Aliivibrio fischeri (strain ATCC 700601 / ES114) (Vibrio fischeri).